A 274-amino-acid polypeptide reads, in one-letter code: Shikimate kinase (274 aa).

Residue 86 to 96 (PVGKGLKSSSA) participates in ATP binding.

Belongs to the GHMP kinase family. Archaeal shikimate kinase subfamily.

The protein resides in the cytoplasm. It carries out the reaction shikimate + ATP = 3-phosphoshikimate + ADP + H(+). Its pathway is metabolic intermediate biosynthesis; chorismate biosynthesis; chorismate from D-erythrose 4-phosphate and phosphoenolpyruvate: step 5/7. This is Shikimate kinase (aroK) from Pyrococcus abyssi (strain GE5 / Orsay).